A 178-amino-acid polypeptide reads, in one-letter code: Photosystem I assembly protein Ycf4 (178 aa).

2 helical membrane passes run 19–39 and 61–81; these read FLVA…SLSS and LVMG…WYVI.

Belongs to the Ycf4 family.

The protein resides in the cellular thylakoid membrane. Functionally, seems to be required for the assembly of the photosystem I complex. In Synechococcus sp. (strain CC9902), this protein is Photosystem I assembly protein Ycf4.